Consider the following 323-residue polypeptide: Down-regulator of invasive growth 2 (323 aa).

Residues 1–10 (MNKEEQEDPQ) show a composition bias toward acidic residues. The tract at residues 1–26 (MNKEEQEDPQQEQISTVQENDPRNLQ) is disordered. Positions 11–26 (QEQISTVQENDPRNLQ) are enriched in polar residues. Phosphoserine is present on S34. Positions 67 to 87 (LSQKEEDHSGKPPTITTSPAE) are disordered. Phosphoserine occurs at positions 225, 266, and 270.

Forms a complex with DIG1, STE12 and either FUS3 or KSS1. The interaction of FUS3 with STE12 depends on the presence of both DIG1 and DIG2. STE12 is lost from FUS3/DIG1/DIG2 complex after pheromone treatment. DIG1 and DIG2 have also been reported to interact with CLN1 and CLN2. Post-translationally, phosphorylated by FUS3 and KSS1, in a pheromone-stimulated manner.

The protein resides in the nucleus. In terms of biological role, DIG2 and DIG1 are negative regulators of the filamentation and pheromone induced mating program. DIG1 and DIG2 inhibit the transcriptional activity of STE12 by direct protein-protein interaction. DIG2 binds to the DNA binding domain (DBD) of STE12 and thus inhibits transcription when overexpressed. The chain is Down-regulator of invasive growth 2 (DIG2) from Saccharomyces cerevisiae (strain ATCC 204508 / S288c) (Baker's yeast).